The primary structure comprises 95 residues: Osteocalcin-related protein (95 aa).

The signal sequence occupies residues 1 to 23 (MRTLSLLTLLALAALCLSDLTDA). The propeptide occupies 24–49 (TPTGPESDKAFMSKQEGNKVVNRLRR). Residues 46–92 (RLRRYLGASVPSPDPLEPTRELCELDPACDELSNQYGLKTAYRRIYG) form the Gla domain. Ca(2+)-binding residues include Glu-62, Glu-66, Glu-69, and Asp-75. 4-carboxyglutamate is present on residues Glu-66 and Glu-69. Cysteines 68 and 74 form a disulfide.

The protein belongs to the osteocalcin/matrix Gla protein family. In terms of processing, gamma-carboxyglutamic acid residues are formed by vitamin K dependent carboxylation. These residues are essential for the binding of calcium. As to expression, expressed in kidney and lung, but not in bone.

Its subcellular location is the secreted. Its function is as follows. Binds strongly to apatite and calcium. The sequence is that of Osteocalcin-related protein from Mus musculus (Mouse).